A 298-amino-acid polypeptide reads, in one-letter code: Super small secreted glycoprotein (298 aa).

A signal peptide spans M1–S32. N-linked (GlcNAc...) asparagine; by host glycosylation is present at N40. 2 disulfides stabilise this stretch: C108–C135 and C121–C147. N-linked (GlcNAc...) asparagine; by host glycosylation is found at N204, N228, N238, N257, and N268.

It belongs to the filoviruses glycoprotein family.

Its subcellular location is the secreted. The protein is Super small secreted glycoprotein (GP) of Epomops franqueti (Franquet's epauletted fruit bat).